The following is a 100-amino-acid chain: MNPRQLEQMARQMQKEMMRIQEELANTTVEGTAGSYVTVTMNGHREIKSIKLAPEVVDPDDVETLQDLIVAAIADASKKAQELAEQRLGPLAGGMKLPGF.

It belongs to the YbaB/EbfC family. Homodimer.

It localises to the cytoplasm. The protein resides in the nucleoid. In terms of biological role, binds to DNA and alters its conformation. May be involved in regulation of gene expression, nucleoid organization and DNA protection. This Roseiflexus sp. (strain RS-1) protein is Nucleoid-associated protein RoseRS_1534.